Reading from the N-terminus, the 436-residue chain is T-box transcription factor TBX6 (436 aa).

The segment at residues 100–273 (LWKEFSSVGT…ANPFAKGFRE (174 aa)) is a DNA-binding region (T-box). Positions 271–284 (FRENGRNCKRERDA) are enriched in basic and acidic residues. Disordered regions lie at residues 271 to 339 (FREN…APAP) and 360 to 379 (PSHL…SGRS). The segment covering 325-339 (EQAPAPGEATAAPAP) has biased composition (low complexity).

As to quaternary structure, forms a dimeric complex with DNA (in vitro). Expressed in fetal tail bud, posterior spinal tissue, intervertebral disk and testis. Also expressed in adult testis, kidney, lung, muscle and thymus.

It is found in the nucleus. Functionally, T-box transcription factor that plays an essential role in the determination of the fate of axial stem cells: neural vs mesodermal. Acts in part by down-regulating, a specific enhancer (N1) of SOX2, to inhibit neural development. Seems to play also an essential role in left/right axis determination and acts through effects on Notch signaling around the node as well as through an effect on the morphology and motility of the nodal cilia. This chain is T-box transcription factor TBX6 (TBX6), found in Homo sapiens (Human).